A 554-amino-acid polypeptide reads, in one-letter code: Formate--tetrahydrofolate ligase (554 aa).

Residue 65–72 (TPAGEGKT) participates in ATP binding.

It belongs to the formate--tetrahydrofolate ligase family.

It catalyses the reaction (6S)-5,6,7,8-tetrahydrofolate + formate + ATP = (6R)-10-formyltetrahydrofolate + ADP + phosphate. It participates in one-carbon metabolism; tetrahydrofolate interconversion. The polypeptide is Formate--tetrahydrofolate ligase (Petrotoga mobilis (strain DSM 10674 / SJ95)).